Consider the following 371-residue polypeptide: Sensor histidine kinase YvfT (371 aa).

Over 1–10 (MKKAISIFPK) the chain is Extracellular. The helical transmembrane segment at 11 to 31 (EFGFFPYIFLVYTIMPFLSLL) threads the bilayer. The Cytoplasmic portion of the chain corresponds to 32-38 (KESGVKQ). A helical transmembrane segment spans residues 39–59 (GIGYGMLLLFVAAYRQLFCSV). Residues 60–71 (GKASFTYWLIVQ) are Extracellular-facing. The helical transmembrane segment at 72 to 92 (MAVILMYSVFYNITYIYLGFF) threads the bilayer. Residues 93–109 (PANFVGYYKEKTNFNRA) are Cytoplasmic-facing. A helical transmembrane segment spans residues 110 to 130 (FCALIFILLFPCLYQFIANSV). The Extracellular portion of the chain corresponds to 131–135 (SLREL). The chain crosses the membrane as a helical span at residues 136–156 (FSVLPFLVIMLISPFGIRSMF). Residues 157–371 (RRIELEAKLA…LTIPLIKKAE (215 aa)) lie on the Cytoplasmic side of the membrane. One can recognise a Histidine kinase domain in the interval 187-368 (DLHDTLGHTL…VVALTIPLIK (182 aa)). Position 189 is a phosphohistidine; by autocatalysis (H189).

The protein resides in the cell membrane. The catalysed reaction is ATP + protein L-histidine = ADP + protein N-phospho-L-histidine.. Functionally, member of the two-component regulatory system YvfT/YvfU. Probably activates YvfU by phosphorylation. In Bacillus subtilis (strain 168), this protein is Sensor histidine kinase YvfT (yvfT).